Here is a 469-residue protein sequence, read N- to C-terminus: ATP-dependent protease ATPase subunit HslU (469 aa).

ATP-binding positions include I24, 66 to 71, D282, E347, and R419; that span reads GVGKTE.

Belongs to the ClpX chaperone family. HslU subfamily. A double ring-shaped homohexamer of HslV is capped on each side by a ring-shaped HslU homohexamer. The assembly of the HslU/HslV complex is dependent on binding of ATP.

Its subcellular location is the cytoplasm. Its function is as follows. ATPase subunit of a proteasome-like degradation complex; this subunit has chaperone activity. The binding of ATP and its subsequent hydrolysis by HslU are essential for unfolding of protein substrates subsequently hydrolyzed by HslV. HslU recognizes the N-terminal part of its protein substrates and unfolds these before they are guided to HslV for hydrolysis. This is ATP-dependent protease ATPase subunit HslU from Listeria monocytogenes serotype 4a (strain HCC23).